A 356-amino-acid chain; its full sequence is Protein-glutamate methylesterase/protein-glutamine glutaminase 4 (356 aa).

Residues 15-132 enclose the Response regulatory domain; the sequence is RVLVVDDSAV…SVGEMTADLV (118 aa). The residue at position 66 (aspartate 66) is a 4-aspartylphosphate. A CheB-type methylesterase domain is found at 162–348; sequence ARTTLQVVAI…PLDRIAPEIL (187 aa). Active-site residues include serine 174, histidine 200, and aspartate 296.

This sequence belongs to the CheB family. Post-translationally, phosphorylated by CheA. Phosphorylation of the N-terminal regulatory domain activates the methylesterase activity.

Its subcellular location is the cytoplasm. It catalyses the reaction [protein]-L-glutamate 5-O-methyl ester + H2O = L-glutamyl-[protein] + methanol + H(+). It carries out the reaction L-glutaminyl-[protein] + H2O = L-glutamyl-[protein] + NH4(+). Involved in chemotaxis. Part of a chemotaxis signal transduction system that modulates chemotaxis in response to various stimuli. Catalyzes the demethylation of specific methylglutamate residues introduced into the chemoreceptors (methyl-accepting chemotaxis proteins or MCP) by CheR. Also mediates the irreversible deamidation of specific glutamine residues to glutamic acid. The protein is Protein-glutamate methylesterase/protein-glutamine glutaminase 4 of Anaeromyxobacter dehalogenans (strain 2CP-C).